The sequence spans 252 residues: Thiamine thiazole synthase (252 aa).

NAD(+)-binding positions include Ser35, 54–55 (EK), Gly62, Val126, and 152–154 (HVD). Asp154 and His169 together coordinate Fe cation. Met217 is a binding site for NAD(+). Arg227 is a glycine binding site.

This sequence belongs to the THI4 family. Homooctamer; tetramer of dimers. Fe(2+) serves as cofactor.

It carries out the reaction hydrogen sulfide + glycine + NAD(+) = ADP-5-ethyl-4-methylthiazole-2-carboxylate + nicotinamide + 3 H2O + H(+). It functions in the pathway cofactor biosynthesis; thiamine diphosphate biosynthesis. Involved in the biosynthesis of the thiazole moiety of thiamine. Catalyzes the conversion of NAD and glycine to adenosine diphosphate 5-(2-hydroxyethyl)-4-methylthiazole-2-carboxylate (ADT), an adenylated thiazole intermediate, using free sulfide as a source of sulfur. This Pyrococcus horikoshii (strain ATCC 700860 / DSM 12428 / JCM 9974 / NBRC 100139 / OT-3) protein is Thiamine thiazole synthase.